The primary structure comprises 245 residues: MKIIFNADDFGISPGAVYGILESYKRGVVKSTTLLANSPAFDLAVEVAKENPGLDIGAHLTLTFGSPVLQGLETLTDDDGRFRRNYTALENGLADVDMNEVERELTAQIEKILDAGITISHFDTHHSIEPLIYPVQHKLAEKYGVSIRRHSDVSDFGAIKTPDLFATEFYADGVSFETIKKLVQEHIGTNDVVEVMTHPAYIDETLREISSYVEPRIKEVSILTSRELQAYLGQQEVEIISFRDL.

Residues His59 and His125 each contribute to the Mg(2+) site.

The protein belongs to the YdjC deacetylase family. Homodimer. Mg(2+) serves as cofactor.

Its function is as follows. Probably catalyzes the deacetylation of acetylated carbohydrates an important step in the degradation of oligosaccharides. In Listeria monocytogenes serotype 4a (strain HCC23), this protein is Carbohydrate deacetylase.